The sequence spans 60 residues: Large ribosomal subunit protein uL30 (60 aa).

This sequence belongs to the universal ribosomal protein uL30 family. As to quaternary structure, part of the 50S ribosomal subunit.

The protein is Large ribosomal subunit protein uL30 of Acidothermus cellulolyticus (strain ATCC 43068 / DSM 8971 / 11B).